The sequence spans 285 residues: MGTPGEGLGRCSHALIRGVPESLASGEGAGAGLPALDLAKAQREHGVLGGKLRQRLGLQLLELPPEESLPLGPLLGDTAVIQGDTALITRPWSPARRPEVDGVRKALQDLGLRIVEIGDENATLDGTDVLFTGREFFVGLSKWTNHRGAEIVADTFRDFAVSTVPVSGPSHLRGLCGMGGPRTVVAGSSDAAQKAVRAMAVLTDHPYASLTLPDDAAADCLFLRPGLPGVPPFLLHRGGGDLPNSQEALQKLSDVTLVPVSCSELEKAGAGLSSLCLVLSTRPHS.

Residue histidine 171 is the Proton donor of the active site. The active-site Nucleophile is cysteine 276.

The protein belongs to the DDAH family. Phosphorylated by TBK1. Phosphorylation inhibits the translocation into the mitochondrion upon Sendai viral infection. Detected in heart, placenta, lung, liver, skeletal muscle, kidney and pancreas, and at very low levels in brain.

It localises to the cytoplasm. It is found in the mitochondrion. Functionally, putative hydrolase with unknown substrate. Does not hydrolyze N(G),N(G)-dimethyl-L-arginine (ADMA) which acts as an inhibitor of NOS. In endothelial cells, induces expression of vascular endothelial growth factor (VEGF) via phosphorylation of the transcription factor SP1 by PKA in a process that is independent of NO and NO synthase. Similarly, enhances pancreatic insulin secretion through SP1-mediated transcriptional up-regulation of secretagogin/SCGN, an insulin vesicle docking protein. Upon viral infection, relocates to mitochondria where it promotes mitochondrial fission through activation of DNM1L leading to the inhibition of innate response activation mediated by MAVS. The chain is Putative hydrolase DDAH2 from Homo sapiens (Human).